A 391-amino-acid chain; its full sequence is Anhydro-N-acetylmuramic acid kinase (391 aa).

9-16 lines the ATP pocket; that stretch reads GTSYDAVE.

The protein belongs to the anhydro-N-acetylmuramic acid kinase family.

It carries out the reaction 1,6-anhydro-N-acetyl-beta-muramate + ATP + H2O = N-acetyl-D-muramate 6-phosphate + ADP + H(+). The protein operates within amino-sugar metabolism; 1,6-anhydro-N-acetylmuramate degradation. It participates in cell wall biogenesis; peptidoglycan recycling. In terms of biological role, catalyzes the specific phosphorylation of 1,6-anhydro-N-acetylmuramic acid (anhMurNAc) with the simultaneous cleavage of the 1,6-anhydro ring, generating MurNAc-6-P. Is required for the utilization of anhMurNAc either imported from the medium or derived from its own cell wall murein, and thus plays a role in cell wall recycling. In Streptomyces coelicolor (strain ATCC BAA-471 / A3(2) / M145), this protein is Anhydro-N-acetylmuramic acid kinase.